The chain runs to 338 residues: D-erythrose-4-phosphate dehydrogenase (338 aa).

An NAD(+)-binding site is contributed by R12 to I13. Substrate-binding positions include S154–T156, R200, T213–K214, and R236. C155 serves as the catalytic Nucleophile. Position 318 (N318) interacts with NAD(+).

The protein belongs to the glyceraldehyde-3-phosphate dehydrogenase family. Epd subfamily. As to quaternary structure, homotetramer.

It localises to the cytoplasm. The catalysed reaction is D-erythrose 4-phosphate + NAD(+) + H2O = 4-phospho-D-erythronate + NADH + 2 H(+). Its pathway is cofactor biosynthesis; pyridoxine 5'-phosphate biosynthesis; pyridoxine 5'-phosphate from D-erythrose 4-phosphate: step 1/5. Catalyzes the NAD-dependent conversion of D-erythrose 4-phosphate to 4-phosphoerythronate. In Tolumonas auensis (strain DSM 9187 / NBRC 110442 / TA 4), this protein is D-erythrose-4-phosphate dehydrogenase.